The following is a 70-amino-acid chain: Sec-independent protein translocase protein TatA (70 aa).

A helical membrane pass occupies residues 1–21 (MFGLGGQELILILLIILLLFG). Residues 50 to 62 (FNKVVDEPPRKTP) show a composition bias toward basic and acidic residues. Residues 50 to 70 (FNKVVDEPPRKTPENSTGSKS) are disordered.

This sequence belongs to the TatA/E family. Forms a complex with TatC.

It localises to the cell inner membrane. Part of the twin-arginine translocation (Tat) system that transports large folded proteins containing a characteristic twin-arginine motif in their signal peptide across membranes. TatA could form the protein-conducting channel of the Tat system. The chain is Sec-independent protein translocase protein TatA from Chlorobium limicola (strain DSM 245 / NBRC 103803 / 6330).